A 589-amino-acid polypeptide reads, in one-letter code: Delta-like protein 3 (589 aa).

The signal sequence occupies residues 1–32; it reads MVSLQVSSLPQTLILAFLLPQALPAGVFELQI. Residues 33 to 494 lie on the Extracellular side of the membrane; the sequence is HSFGPGPGPG…LRQADSQRFL (462 aa). The 40-residue stretch at 174-213 folds into the DSL domain; that stretch reads ARCEPPAVGAACARLCRSRSAPSRCGPGLRPCTPFPDECE. EGF-like domains are found at residues 218 to 251, 276 to 312, 314 to 353, 355 to 391, 393 to 429, and 431 to 467; these read SLTV…PLCT, GPGP…PRCE, SGVT…SNCE, RVDR…PRCE, DLDD…RDCR, and RADP…VRCE. Cystine bridges form between Cys-222–Cys-233, Cys-226–Cys-239, Cys-241–Cys-250, Cys-280–Cys-291, Cys-285–Cys-300, Cys-302–Cys-311, Cys-318–Cys-329, Cys-323–Cys-341, Cys-343–Cys-352, Cys-359–Cys-370, Cys-364–Cys-379, Cys-381–Cys-390, Cys-397–Cys-408, Cys-402–Cys-417, Cys-419–Cys-428, Cys-435–Cys-446, Cys-440–Cys-455, and Cys-457–Cys-466. The chain crosses the membrane as a helical span at residues 495–515; the sequence is LPPALGLLAAAALAGAALLLI. The Cytoplasmic portion of the chain corresponds to 516–589; the sequence is HVRRRGPGRD…PAPSIYAREA (74 aa). The interval 552 to 574 is disordered; the sequence is QDGAGDGPTSSADWNHPEDGDSR.

As to quaternary structure, can bind and activate Notch-1 or another Notch receptor. Ubiquitinated by MIB (MIB1 or MIB2), leading to its endocytosis and subsequent degradation.

It localises to the membrane. In terms of biological role, inhibits primary neurogenesis. May be required to divert neurons along a specific differentiation pathway. Plays a role in the formation of somite boundaries during segmentation of the paraxial mesoderm. This chain is Delta-like protein 3 (Dll3), found in Rattus norvegicus (Rat).